Reading from the N-terminus, the 948-residue chain is MDKTYQPHAIETSWYQTWESENYFAPQGAGDSYTIMIPPPNVTGSLHMGHGFNNAIMDALIRFRRMQGRNTLWQPGTDHAGIATQMLVERRLEAQGVSRHELGREKFLDKIWEWKAESGGNISRQIRRLGSSVDWSRERFTMDDGLSDAVKEAFVRLHEDGLIYRGKRLVNWDTKLHTAISDLEVENHDEKGHLWNLRYPLADGAKTAEGLDYLIVATTRPETMLGDAAVAVNPQDERYKALIGKFVELPLVGRRIPIIADDYCDPEFGTGCVKITPAHDFNDYEVGKRHNLPLLNIFDKNANVLPAAQVFNLDGKLNESVDGTLPAAYAGLDRFEARKQIVAAFDAAGLLVSIDDHALKVPKGDRSGTIIEPWLTDQWYVSTKPLAEPAIAAVEDGRIAFVPKQYENMYFSWMRDIQDWCISRQLWWGHRIPAWYDESGKVYVGRDEAEVRAKNNLGPEIALQQDNDVLDTWFSSGLWTFSTLGWPEKTKALETFHSTDVLVTGFDIIFFWVARMIMLTLHLVKNEDGTPQVPFKTVYVHGLVRDGQGQKMSKSKGNVLDPLDIVDGIDLETLVEKRTSGLMQPQLAKKIEKQTRQEFADGIASYGTDALRFTFCSLASTGRDIKFDMGRVEGYRNFCNKIWNAARYVLDKGEDCGQNGEAVELSLADRWIISQLQRTEAEVTRQLDQFRFDLAAQALYEFIWNQYCDWYLELSKPVLWDETASIERQRGTRRTLVRVLEVALRLAHPFMPFITEEIWQRLAPLAGVEGKTIMLQPWPVANEARIDQAAEDDIEWLKGLMLAVRNIRGEMNIGPGKPLQLFLKNVSADDQRRLSENDYLLRKLAKLESMTVLTDGAEAPLSATALVGDMEVLVPMAGLIDKGAELARLDKEIQRLQGEVQRVGGKLSNAAFVDKAPPDVIAKERAKLTEAEQALGKLAEQHARIASL.

The 'HIGH' region motif lies at 40-50; it reads PNVTGSLHMGH. Residues 551–555 carry the 'KMSKS' region motif; it reads KMSKS. ATP is bound at residue K554. Residues 879–945 adopt a coiled-coil conformation; the sequence is LIDKGAELAR…GKLAEQHARI (67 aa).

Belongs to the class-I aminoacyl-tRNA synthetase family. ValS type 1 subfamily. In terms of assembly, monomer.

Its subcellular location is the cytoplasm. The catalysed reaction is tRNA(Val) + L-valine + ATP = L-valyl-tRNA(Val) + AMP + diphosphate. Catalyzes the attachment of valine to tRNA(Val). As ValRS can inadvertently accommodate and process structurally similar amino acids such as threonine, to avoid such errors, it has a 'posttransfer' editing activity that hydrolyzes mischarged Thr-tRNA(Val) in a tRNA-dependent manner. This is Valine--tRNA ligase from Pseudomonas syringae pv. tomato (strain ATCC BAA-871 / DC3000).